Reading from the N-terminus, the 76-residue chain is Senegalin (76 aa).

A signal peptide spans 1–22 (MLSLKKSMLLLFFLGMVSFSLA). A propeptide spanning residues 23 to 55 (NKRSDGKRADEEGEDKRADEEGEDKRADEEGED) is cleaved from the precursor. The disordered stretch occupies residues 24-54 (KRSDGKRADEEGEDKRADEEGEDKRADEEGE). A Leucine amide modification is found at Leu75.

In terms of tissue distribution, expressed by the skin glands.

It is found in the secreted. Its function is as follows. Antimicrobial peptide with activity against the Gram-positive bacterium S.aureus NCTC 10788 (MIC=50 um) and the yeast C.albicans NCPF 1467 (MIC=150 uM). Ineffective against the Gram-negative bacterium E.coli NCTC 10418. Induces a dose-dependent contraction of rat urinary bladder smooth muscle (EC50=2.9 nM) and a dose-dependent relaxation of rat tail artery smooth muscle (EC50=37.7 nM). This chain is Senegalin, found in Kassina senegalensis (Senegal running frog).